The primary structure comprises 507 residues: ATP synthase subunit alpha, chloroplastic (507 aa).

Residue 170–177 (GDRQTGKT) participates in ATP binding.

It belongs to the ATPase alpha/beta chains family. In terms of assembly, F-type ATPases have 2 components, CF(1) - the catalytic core - and CF(0) - the membrane proton channel. CF(1) has five subunits: alpha(3), beta(3), gamma(1), delta(1), epsilon(1). CF(0) has four main subunits: a, b, b' and c.

The protein resides in the plastid. Its subcellular location is the chloroplast thylakoid membrane. The enzyme catalyses ATP + H2O + 4 H(+)(in) = ADP + phosphate + 5 H(+)(out). Produces ATP from ADP in the presence of a proton gradient across the membrane. The alpha chain is a regulatory subunit. This is ATP synthase subunit alpha, chloroplastic from Silene latifolia (White campion).